Consider the following 584-residue polypeptide: 2-succinyl-5-enolpyruvyl-6-hydroxy-3-cyclohexene-1-carboxylate synthase (584 aa).

Belongs to the TPP enzyme family. MenD subfamily. Homodimer. The cofactor is Mg(2+). Mn(2+) is required as a cofactor. Requires thiamine diphosphate as cofactor.

The enzyme catalyses isochorismate + 2-oxoglutarate + H(+) = 5-enolpyruvoyl-6-hydroxy-2-succinyl-cyclohex-3-ene-1-carboxylate + CO2. It functions in the pathway quinol/quinone metabolism; 1,4-dihydroxy-2-naphthoate biosynthesis; 1,4-dihydroxy-2-naphthoate from chorismate: step 2/7. The protein operates within quinol/quinone metabolism; menaquinone biosynthesis. In terms of biological role, catalyzes the thiamine diphosphate-dependent decarboxylation of 2-oxoglutarate and the subsequent addition of the resulting succinic semialdehyde-thiamine pyrophosphate anion to isochorismate to yield 2-succinyl-5-enolpyruvyl-6-hydroxy-3-cyclohexene-1-carboxylate (SEPHCHC). This is 2-succinyl-5-enolpyruvyl-6-hydroxy-3-cyclohexene-1-carboxylate synthase from Bacillus cereus (strain ATCC 10987 / NRS 248).